Here is a 187-residue protein sequence, read N- to C-terminus: Alkyl hydroperoxide reductase C (187 aa).

The Thioredoxin domain occupies 2–157 (SLINTKIKPF…LLRKIKAAQY (156 aa)). The active-site Cysteine sulfenic acid (-SOH) intermediate is the cysteine 47.

This sequence belongs to the peroxiredoxin family. AhpC/Prx1 subfamily. Homodimer; disulfide-linked, upon oxidation. 5 homodimers assemble to form a ring-like decamer.

It localises to the cytoplasm. It carries out the reaction a hydroperoxide + NADH + H(+) = an alcohol + NAD(+) + H2O. In terms of biological role, thiol-specific peroxidase that catalyzes the reduction of hydrogen peroxide and organic hydroperoxides to water and alcohols, respectively. Plays a role in cell protection against oxidative stress by detoxifying peroxides. The sequence is that of Alkyl hydroperoxide reductase C (ahpC) from Salmonella typhi.